The sequence spans 216 residues: Adenylate kinase (216 aa).

10-15 (GAGKGT) contributes to the ATP binding site. Positions 30 to 59 (STGDIFRANIKEKTPLGIEAKRYMDNGQLV) are NMP. AMP-binding positions include Thr-31, Arg-36, 57-59 (QLV), 85-88 (GFPR), and Gln-92. The LID stretch occupies residues 126-163 (GRRVCTSCGASYHIRFNPPKIEGKCDICDNELIQRKDD). Position 127 (Arg-127) interacts with ATP. Positions 130 and 133 each coordinate Zn(2+). 136-137 (SY) is a binding site for ATP. Zn(2+) contacts are provided by Cys-150 and Cys-153. AMP-binding residues include Arg-160 and Arg-171. Glu-199 contacts ATP.

The protein belongs to the adenylate kinase family. Monomer.

Its subcellular location is the cytoplasm. It carries out the reaction AMP + ATP = 2 ADP. It functions in the pathway purine metabolism; AMP biosynthesis via salvage pathway; AMP from ADP: step 1/1. Catalyzes the reversible transfer of the terminal phosphate group between ATP and AMP. Plays an important role in cellular energy homeostasis and in adenine nucleotide metabolism. The sequence is that of Adenylate kinase from Clostridium botulinum (strain Loch Maree / Type A3).